A 69-amino-acid chain; its full sequence is Putative membrane protein insertion efficiency factor (69 aa).

The protein belongs to the UPF0161 family.

Its subcellular location is the cell membrane. Functionally, could be involved in insertion of integral membrane proteins into the membrane. In Desulfitobacterium hafniense (strain Y51), this protein is Putative membrane protein insertion efficiency factor.